Reading from the N-terminus, the 587-residue chain is Leucine-rich repeat-containing protein 63 (587 aa).

LRR repeat units follow at residues 251–274, 344–367, 368–390, 392–413, 414–436, 437–459, and 487–510; these read QSVIETLVTENGNIESVPKQIPPR, AFQLIYLNLSFNDLHYFPTEILCL, KNLQILKLRNNPIKEIPSEIQQL, FLRIFTIAFNLITVLPIGLFSL, SYLEELDVSYNELTFIPNEIQKL, RSLEKLTVDGNELSFFPHGILKL, and LTQIISLFIVQNKLHKFYDKIPVE.

This Homo sapiens (Human) protein is Leucine-rich repeat-containing protein 63 (LRRC63).